The chain runs to 339 residues: Phenylalanine--tRNA ligase alpha subunit (339 aa).

Mg(2+) is bound at residue glutamate 253.

The protein belongs to the class-II aminoacyl-tRNA synthetase family. Phe-tRNA synthetase alpha subunit type 1 subfamily. Tetramer of two alpha and two beta subunits. Requires Mg(2+) as cofactor.

The protein localises to the cytoplasm. It carries out the reaction tRNA(Phe) + L-phenylalanine + ATP = L-phenylalanyl-tRNA(Phe) + AMP + diphosphate + H(+). The sequence is that of Phenylalanine--tRNA ligase alpha subunit from Geobacter sulfurreducens (strain ATCC 51573 / DSM 12127 / PCA).